A 202-amino-acid polypeptide reads, in one-letter code: Putative scarecrow-like protein 16 (202 aa).

A VHIID region spans residues 1–26 (MQIPTLIDSMANKLHKKPPPLLKLTV). Residues 1–202 (MQIPTLIDSM…RVERLEPKSR (202 aa)) enclose the GRAS domain. Residues 45–82 (ELGSKLVNFATTRNVAMEFRIISSSYSDGLSSLIEQLR) form a leucine repeat II (LRII) region. The segment at 92–184 (LVVNCHMMLH…EADISWKIDN (93 aa)) is PFYRE. Residues 187–202 (AKEGAERVERLEPKSR) are SAW.

The protein belongs to the GRAS family. In terms of tissue distribution, expressed in seedlings, leaves and flowers.

The protein resides in the nucleus. Probable transcription factor involved in plant development. This chain is Putative scarecrow-like protein 16 (SCL16), found in Arabidopsis thaliana (Mouse-ear cress).